The following is a 190-amino-acid chain: Peptidyl-tRNA hydrolase (190 aa).

TRNA is bound at residue Tyr-14. His-19 functions as the Proton acceptor in the catalytic mechanism. TRNA is bound by residues Tyr-64 and Asn-66.

This sequence belongs to the PTH family. As to quaternary structure, monomer.

The protein localises to the cytoplasm. It carries out the reaction an N-acyl-L-alpha-aminoacyl-tRNA + H2O = an N-acyl-L-amino acid + a tRNA + H(+). In terms of biological role, hydrolyzes ribosome-free peptidyl-tRNAs (with 1 or more amino acids incorporated), which drop off the ribosome during protein synthesis, or as a result of ribosome stalling. Catalyzes the release of premature peptidyl moieties from peptidyl-tRNA molecules trapped in stalled 50S ribosomal subunits, and thus maintains levels of free tRNAs and 50S ribosomes. The protein is Peptidyl-tRNA hydrolase of Rhodopirellula baltica (strain DSM 10527 / NCIMB 13988 / SH1).